An 84-amino-acid polypeptide reads, in one-letter code: Minor capsid protein P30 (84 aa).

In terms of assembly, dimer.

It localises to the virion. Functionally, minor capsid protein essential for stable capsid assembly of complete particles. This Enterobacteria phage PRD1 (Bacteriophage PRD1) protein is Minor capsid protein P30 (XXX).